We begin with the raw amino-acid sequence, 119 residues long: Aspartate 1-decarboxylase (119 aa).

S25 functions as the Schiff-base intermediate with substrate; via pyruvic acid in the catalytic mechanism. Position 25 is a pyruvic acid (Ser) (S25). T57 contacts substrate. Y58 serves as the catalytic Proton donor. G73–A75 contacts substrate.

This sequence belongs to the PanD family. In terms of assembly, heterooctamer of four alpha and four beta subunits. Requires pyruvate as cofactor. Post-translationally, is synthesized initially as an inactive proenzyme, which is activated by self-cleavage at a specific serine bond to produce a beta-subunit with a hydroxyl group at its C-terminus and an alpha-subunit with a pyruvoyl group at its N-terminus.

The protein localises to the cytoplasm. It carries out the reaction L-aspartate + H(+) = beta-alanine + CO2. It participates in cofactor biosynthesis; (R)-pantothenate biosynthesis; beta-alanine from L-aspartate: step 1/1. Catalyzes the pyruvoyl-dependent decarboxylation of aspartate to produce beta-alanine. This chain is Aspartate 1-decarboxylase, found in Herminiimonas arsenicoxydans.